The chain runs to 2473 residues: Reducing polyketide synthase grgA (2473 aa).

The Ketosynthase family 3 (KS3) domain occupies 15-446; that stretch reads REPIAIVGSS…GTNAHAIIES (432 aa). Catalysis depends on for beta-ketoacyl synthase activity residues C188, H327, and H366. One can recognise a Malonyl-CoA:ACP transacylase (MAT) domain in the interval 559 to 882; it reads IFTGQGAQWA…SGVLKRGQNA (324 aa). Residues 956 to 1099 form an N-terminal hotdog fold region; it reads HELLGHSVTH…GGVRLWLGEP (144 aa). The segment at 956 to 1260 is dehydratase (DH) domain; the sequence is HELLGHSVTH…IHLSAVGQRR (305 aa). The 307-residue stretch at 956–1262 folds into the PKS/mFAS DH domain; that stretch reads HELLGHSVTH…LSAVGQRRDP (307 aa). The active-site Proton acceptor; for dehydratase activity is H990. The tract at residues 1114–1262 is C-terminal hotdog fold; the sequence is MEALDMEQLY…LSAVGQRRDP (149 aa). D1172 functions as the Proton donor; for dehydratase activity in the catalytic mechanism. Positions 1300 to 1606 are methyltransfrase (MT) domain; that stretch reads TAYFYLRQLR…PSFCSVIVAQ (307 aa). One can recognise a Ketoreductase (KR) domain in the interval 2108–2281; it reads TYLLCGMTGD…AGSVIHIAIL (174 aa). Residues 2388 to 2473 form the Carrier domain; it reads AECLVILESC…LVEWRRLNKS (86 aa). S2426 is subject to O-(pantetheine 4'-phosphoryl)serine.

Requires pantetheine 4'-phosphate as cofactor.

Its pathway is secondary metabolite biosynthesis. Its function is as follows. Reducing polyketide synthase; part of the gene cluster that mediates the biosynthesis of gregatin A, a fungal polyketide featuring an alkylated furanone core. The PKS grgA synthesizes C11 and C4 polyketide chains in the presence and absence of the trans-enoyl reductase grgB, respectively. The polyketide transferase grgF is then responsible for the fusion of the two carbon chains to produce the furanone skeleton of gregatin A. Next, the cytochrome P450 monooxygenase grgG accepts performs the oxidative cyclization to furnish the gregatin scaffold and leads to the formation of desmethylgregatin A. Finally, the O-methyltransferase grgD methylates the carboxyl group of desmethylgregatin A to provide gregatin A. This is Reducing polyketide synthase grgA from Penicillium sp.